The sequence spans 195 residues: Toxin protein Tse4 (195 aa).

The next 4 membrane-spanning stretches (helical) occupy residues 20 to 40, 116 to 136, 140 to 160, and 171 to 191; these read ASGGGMTVAFLAGSGGSITLL, YVELGAGVIAGGSGTAILFGL, LLAAVALASASPLTAALGASM, and ALLMAGVNVGAQFGGGAAAYL.

Its subcellular location is the host membrane. It localises to the secreted. Its function is as follows. Toxin secreted by the H1 type VI (H1-T6SS) secretion system into the periplasm of recipient cells. In Pseudomonas aeruginosa (strain ATCC 15692 / DSM 22644 / CIP 104116 / JCM 14847 / LMG 12228 / 1C / PRS 101 / PAO1), this protein is Toxin protein Tse4.